A 182-amino-acid polypeptide reads, in one-letter code: Adenine phosphoribosyltransferase (182 aa).

Belongs to the purine/pyrimidine phosphoribosyltransferase family. As to quaternary structure, homodimer.

The protein resides in the cytoplasm. It carries out the reaction AMP + diphosphate = 5-phospho-alpha-D-ribose 1-diphosphate + adenine. The protein operates within purine metabolism; AMP biosynthesis via salvage pathway; AMP from adenine: step 1/1. Functionally, catalyzes a salvage reaction resulting in the formation of AMP, that is energically less costly than de novo synthesis. This chain is Adenine phosphoribosyltransferase, found in Pseudomonas fluorescens (strain SBW25).